Here is a 491-residue protein sequence, read N- to C-terminus: Cobyric acid synthase (491 aa).

One can recognise a GATase cobBQ-type domain in the interval 250-437 (QLRVVVPVLP…VHGVFDHPQA (188 aa)). Cys-331 serves as the catalytic Nucleophile. His-429 is a catalytic residue.

It belongs to the CobB/CobQ family. CobQ subfamily.

Its pathway is cofactor biosynthesis; adenosylcobalamin biosynthesis. Catalyzes amidations at positions B, D, E, and G on adenosylcobyrinic A,C-diamide. NH(2) groups are provided by glutamine, and one molecule of ATP is hydrogenolyzed for each amidation. The polypeptide is Cobyric acid synthase (Xanthomonas axonopodis pv. citri (strain 306)).